The following is a 524-amino-acid chain: Cytochrome P450 6k1 (524 aa).

Cys-464 is a heme binding site.

The protein belongs to the cytochrome P450 family. Requires heme as cofactor.

Its subcellular location is the endoplasmic reticulum membrane. The protein localises to the microsome membrane. The chain is Cytochrome P450 6k1 (CYP6K1) from Blattella germanica (German cockroach).